We begin with the raw amino-acid sequence, 319 residues long: Coproporphyrin III ferrochelatase (319 aa).

The Fe(2+) site is built by H193 and E274.

This sequence belongs to the ferrochelatase family.

It localises to the cytoplasm. It carries out the reaction Fe-coproporphyrin III + 2 H(+) = coproporphyrin III + Fe(2+). It participates in porphyrin-containing compound metabolism; protoheme biosynthesis. In terms of biological role, involved in coproporphyrin-dependent heme b biosynthesis. Catalyzes the insertion of ferrous iron into coproporphyrin III to form Fe-coproporphyrin III. The chain is Coproporphyrin III ferrochelatase from Streptococcus mutans serotype c (strain ATCC 700610 / UA159).